The primary structure comprises 618 residues: Glucose starvation modulator protein 1 (618 aa).

Positions C20–C48 form a DNA-binding region, zn(2)-C6 fungal-type. The tract at residues A325–E352 is disordered. Over residues A335–E352 the composition is skewed to basic and acidic residues. The 73-residue stretch at L466 to G538 folds into the PAS domain.

This sequence belongs to the ERT1/acuK family.

It is found in the nucleus. Functionally, transcription factor which regulates nonfermentable carbon utilization. Binds specifically to 5'-CGGN(8)CGG-3' and 5'-CGGN(9)CGG-3' sequences in the promoter region. This is Glucose starvation modulator protein 1 (GSM1) from Saccharomyces cerevisiae (strain RM11-1a) (Baker's yeast).